Here is a 223-residue protein sequence, read N- to C-terminus: Voltage-dependent calcium channel gamma-1 subunit (223 aa).

The Cytoplasmic portion of the chain corresponds to methionine 1–arginine 10. A helical membrane pass occupies residues valine 11–threonine 29. The Extracellular portion of the chain corresponds to aspartate 30 to alanine 109. Residues asparagine 43 and asparagine 80 are each glycosylated (N-linked (GlcNAc...) asparagine). Residues cysteine 57 and cysteine 81 are joined by a disulfide bond. The chain crosses the membrane as a helical span at residues alanine 110–phenylalanine 130. At glycine 131–aspartate 135 the chain is on the cytoplasmic side. Residues tyrosine 136–valine 156 form a helical membrane-spanning segment. The Extracellular segment spans residues glutamate 157–serine 180. A helical membrane pass occupies residues tryptophan 181–leucine 205. Residues proline 206–histidine 223 lie on the Cytoplasmic side of the membrane.

This sequence belongs to the PMP-22/EMP/MP20 family. CACNG subfamily. Component of a calcium channel complex consisting of a pore-forming alpha subunit (CACNA1S) and the ancillary subunits CACNB1 or CACNB2, CACNG1 and CACNA2D1. The channel complex contains alpha, beta, gamma and delta subunits in a 1:1:1:1 ratio, i.e. it contains either CACNB1 or CACNB2. Post-translationally, N-glycosylated. In terms of tissue distribution, skeletal muscle.

The protein localises to the cell membrane. It localises to the sarcolemma. Regulatory subunit of the voltage-gated calcium channel that gives rise to L-type calcium currents in skeletal muscle. Regulates channel inactivation kinetics. This is Voltage-dependent calcium channel gamma-1 subunit (Cacng1) from Rattus norvegicus (Rat).